We begin with the raw amino-acid sequence, 200 residues long: TATA-box-binding protein (200 aa).

2 tandem repeats follow at residues 25-101 (LQNI…ARII) and 115-192 (IQNI…YPVL).

This sequence belongs to the TBP family. In terms of assembly, belongs to the TFIID complex together with the TBP-associated factors (TAFs). Binds DNA as monomer.

It localises to the nucleus. Its function is as follows. General transcription factor that functions at the core of the DNA-binding multiprotein factor TFIID. Binding of TFIID to the TATA box is the initial transcriptional step of the pre-initiation complex (PIC), playing a role in the activation of eukaryotic genes transcribed by RNA polymerase II. In Mesembryanthemum crystallinum (Common ice plant), this protein is TATA-box-binding protein.